Here is a 178-residue protein sequence, read N- to C-terminus: MAAELLEQPVLGSRRLSNILVAAMVTIGGVGFLFASLSSYLGRDLLPLGHPAGLVFVPQGLVMGLYSIAAALLATYLWAVIAIDVGSGSNRFDKQAGVITISRRGFRKPISVEIPLKDVQAVKVEVRDGFNTRRRVSLRVQGRRDMPLTRVGEPLPLAQLEQDGAELARFLGVNLEGL.

2 helical membrane passes run 19 to 39 (ILVAAMVTIGGVGFLFASLSS) and 61 to 81 (LVMGLYSIAAALLATYLWAVI).

Belongs to the Ycf4 family.

It localises to the cellular thylakoid membrane. Seems to be required for the assembly of the photosystem I complex. This is Photosystem I assembly protein Ycf4 from Synechococcus sp. (strain WH7803).